Consider the following 142-residue polypeptide: Organic hydroperoxide resistance protein-like 2 (142 aa).

Belongs to the OsmC/Ohr family.

The polypeptide is Organic hydroperoxide resistance protein-like 2 (Staphylococcus epidermidis (strain ATCC 35984 / DSM 28319 / BCRC 17069 / CCUG 31568 / BM 3577 / RP62A)).